The primary structure comprises 173 residues: Disulfide bond formation protein B (173 aa).

At 1–16 the chain is on the cytoplasmic side; it reads MRILSSLKTFSQSRLS. The chain crosses the membrane as a helical span at residues 17–33; it reads WLLLLAFVVFFTLCAMY. The Periplasmic portion of the chain corresponds to 34–51; the sequence is FQHVMLLAPCVMCIYERI. C43 and C46 form a disulfide bridge. A helical transmembrane segment spans residues 52 to 67; it reads AMLGIGVAALIGAIAP. Residues 68 to 74 are Cytoplasmic-facing; it reads QNPVVRW. Residues 75-92 form a helical membrane-spanning segment; that stretch reads LGFAAWGASSYKGLMLAI. Over 93–147 the chain is Periplasmic; it reads EHVNYQFNPSPFATCDLFVTFPAWAPLNQWAPNLFEAYGDCSKVVWQFLTLSMPQ. C107 and C133 are oxidised to a cystine. A helical membrane pass occupies residues 148–166; sequence WLVVIFAANLLALAIFVVA. Residues 167-173 are Cytoplasmic-facing; sequence QLAKTSR.

It belongs to the DsbB family.

The protein resides in the cell inner membrane. Its function is as follows. Required for disulfide bond formation in some periplasmic proteins. Acts by oxidizing the DsbA protein. This is Disulfide bond formation protein B from Vibrio cholerae serotype O1 (strain ATCC 39315 / El Tor Inaba N16961).